The primary structure comprises 142 residues: Hemoglobin subunit alpha (142 aa).

The residue at position 1 (Ser1) is an N-acetylserine. The Globin domain maps to 1-142; that stretch reads SLTAKSKSIV…VASALSEKYR (142 aa). O2 is bound at residue His59. His88 serves as a coordination point for heme b.

This sequence belongs to the globin family. As to quaternary structure, heterotetramer of two alpha chains and two beta chains. Red blood cells.

Functionally, involved in oxygen transport from gills to the various peripheral tissues. The sequence is that of Hemoglobin subunit alpha (hba) from Electrophorus electricus (Electric eel).